A 369-amino-acid polypeptide reads, in one-letter code: Protein-glutamate methylesterase/protein-glutamine glutaminase 1 (369 aa).

Positions K3 to D120 constitute a Response regulatory domain. The residue at position 54 (D54) is a 4-aspartylphosphate. The span at R136–S168 shows a compositional bias: low complexity. The segment at R136–V174 is disordered. Positions G177–K369 constitute a CheB-type methylesterase domain. Catalysis depends on residues S189, H216, and D312.

This sequence belongs to the CheB family. Phosphorylated by CheA. Phosphorylation of the N-terminal regulatory domain activates the methylesterase activity.

It localises to the cytoplasm. The enzyme catalyses [protein]-L-glutamate 5-O-methyl ester + H2O = L-glutamyl-[protein] + methanol + H(+). It catalyses the reaction L-glutaminyl-[protein] + H2O = L-glutamyl-[protein] + NH4(+). Its function is as follows. Involved in chemotaxis. Part of a chemotaxis signal transduction system that modulates chemotaxis in response to various stimuli. Catalyzes the demethylation of specific methylglutamate residues introduced into the chemoreceptors (methyl-accepting chemotaxis proteins or MCP) by CheR. Also mediates the irreversible deamidation of specific glutamine residues to glutamic acid. The protein is Protein-glutamate methylesterase/protein-glutamine glutaminase 1 of Oleidesulfovibrio alaskensis (strain ATCC BAA-1058 / DSM 17464 / G20) (Desulfovibrio alaskensis).